A 253-amino-acid chain; its full sequence is MEFVVVIPARYASSRLPGKPLADICGKPMIQHVYEKACLSGASKVVIATDHQKVFDAVSTFTSDVLMTREDHQSGTERLAEVVDLLKLDNNTIVVNVQGDEPLLAPENVSQVATLLNESTAPMATLSVAIEEQEDVFNPNAVKVVSDINKNALYFSRASIPFDRSAMMGEQSTLDLTPFQRHVGIYAYRAGFIKQYIELSVSPLEQLESLEQLRVLYHGYNIKIEQAHITPQAGVDTPEDLAKVISYLQSKHA.

It belongs to the KdsB family.

It is found in the cytoplasm. It catalyses the reaction 3-deoxy-alpha-D-manno-oct-2-ulosonate + CTP = CMP-3-deoxy-beta-D-manno-octulosonate + diphosphate. It functions in the pathway nucleotide-sugar biosynthesis; CMP-3-deoxy-D-manno-octulosonate biosynthesis; CMP-3-deoxy-D-manno-octulosonate from 3-deoxy-D-manno-octulosonate and CTP: step 1/1. The protein operates within bacterial outer membrane biogenesis; lipopolysaccharide biosynthesis. Functionally, activates KDO (a required 8-carbon sugar) for incorporation into bacterial lipopolysaccharide in Gram-negative bacteria. In Pseudoalteromonas translucida (strain TAC 125), this protein is 3-deoxy-manno-octulosonate cytidylyltransferase.